Here is a 667-residue protein sequence, read N- to C-terminus: Phosphomethylpyrimidine synthase (667 aa).

Residues Asn235, Met264, Tyr293, His329, 349–351 (SRG), 390–393 (DGMR), and Glu429 each bind substrate. His433 is a binding site for Zn(2+). Tyr456 contributes to the substrate binding site. Residue His497 participates in Zn(2+) binding. Residues Cys577, Cys580, and Cys585 each coordinate [4Fe-4S] cluster. Residues 618–642 (DSYTGSESDTAKRASQREQGMAQMS) are disordered.

The protein belongs to the ThiC family. Homodimer. It depends on [4Fe-4S] cluster as a cofactor.

It catalyses the reaction 5-amino-1-(5-phospho-beta-D-ribosyl)imidazole + S-adenosyl-L-methionine = 4-amino-2-methyl-5-(phosphooxymethyl)pyrimidine + CO + 5'-deoxyadenosine + formate + L-methionine + 3 H(+). Its pathway is cofactor biosynthesis; thiamine diphosphate biosynthesis. Catalyzes the synthesis of the hydroxymethylpyrimidine phosphate (HMP-P) moiety of thiamine from aminoimidazole ribotide (AIR) in a radical S-adenosyl-L-methionine (SAM)-dependent reaction. This chain is Phosphomethylpyrimidine synthase, found in Shewanella pealeana (strain ATCC 700345 / ANG-SQ1).